Consider the following 305-residue polypeptide: Tyrosine recombinase XerC (305 aa).

Residues 4-95 form the Core-binding (CB) domain; that stretch reads TSIQALINKW…AVKNFYRFLE (92 aa). Positions 116–298 constitute a Tyr recombinase domain; the sequence is LLPKALSEDD…SIKHLEAVYT (183 aa). Residues R159, K182, H250, R253, and H276 contribute to the active site. The active-site O-(3'-phospho-DNA)-tyrosine intermediate is the Y285.

It belongs to the 'phage' integrase family. XerC subfamily. Forms a cyclic heterotetrameric complex composed of two molecules of XerC and two molecules of XerD.

The protein localises to the cytoplasm. In terms of biological role, site-specific tyrosine recombinase, which acts by catalyzing the cutting and rejoining of the recombining DNA molecules. The XerC-XerD complex is essential to convert dimers of the bacterial chromosome into monomers to permit their segregation at cell division. It also contributes to the segregational stability of plasmids. This Rickettsia massiliae (strain Mtu5) protein is Tyrosine recombinase XerC.